The chain runs to 62 residues: Small ribosomal subunit protein bS21C (62 aa).

The tract at residues 43–62 (EKSKRKKLALHKQSKRRFRT) is disordered. A compositionally biased stretch (basic residues) spans 45–62 (SKRKKLALHKQSKRRFRT).

This sequence belongs to the bacterial ribosomal protein bS21 family.

This chain is Small ribosomal subunit protein bS21C, found in Trichormus variabilis (strain ATCC 29413 / PCC 7937) (Anabaena variabilis).